The following is a 137-amino-acid chain: Fluoride-specific ion channel FluC 1 (137 aa).

Helical transmembrane passes span 3-23, 42-62, 69-89, and 107-127; these read PLVV…RLVL, INVT…GHGL, ILGT…YEAV, and MMFL…LAVA. Residues Gly-76 and Thr-79 each coordinate Na(+).

Belongs to the fluoride channel Fluc/FEX (TC 1.A.43) family.

The protein resides in the cell membrane. It carries out the reaction fluoride(in) = fluoride(out). Its activity is regulated as follows. Na(+) is not transported, but it plays an essential structural role and its presence is essential for fluoride channel function. In terms of biological role, fluoride-specific ion channel. Important for reducing fluoride concentration in the cell, thus reducing its toxicity. This Leifsonia xyli subsp. xyli (strain CTCB07) protein is Fluoride-specific ion channel FluC 1.